A 216-amino-acid polypeptide reads, in one-letter code: Urease accessory protein UreG (216 aa).

24–31 (GPVGSGKT) contacts GTP.

It belongs to the SIMIBI class G3E GTPase family. UreG subfamily. Homodimer. UreD, UreF and UreG form a complex that acts as a GTP-hydrolysis-dependent molecular chaperone, activating the urease apoprotein by helping to assemble the nickel containing metallocenter of UreC. The UreE protein probably delivers the nickel.

Its subcellular location is the cytoplasm. In terms of biological role, facilitates the functional incorporation of the urease nickel metallocenter. This process requires GTP hydrolysis, probably effectuated by UreG. This is Urease accessory protein UreG from Variovorax paradoxus (strain S110).